The primary structure comprises 389 residues: MAGGRPQLKRSFSIIPCFVFVEILLGELARAFFPAPPSAVPIIGESTIVSGACCRFSPPLRRLVRFLGVYSFGLFTTTIFANAGQVVTGNPTPHFLSVCRPNYTALGCPPPSPDRPGPDRFVNDQGACAGSPSLVAAARRAFPCKDAALCAYAVTYTAMYVTLVFRVKGSRLVKPSLCLALLCPAFLVGVVRVAEYRNHWSDVLAGFLTGAAIATFLVTCVVHNFQSRPPSGRRLSPWEDLSQAPTMDSPLEKLSVAQEPEGCRSHSTPARLTPSKPQNCARRGHLIPNCVSSRAPAMCSSPRVPRPRLRSEPTPLPLPLPLPAPAPSQGPSPSSPGPGGPGGGGSRGRKLLLPTPLLRDLYTLSGLYPSPFHRDNFSPYLFASRDHLL.

2 consecutive transmembrane segments (helical) span residues 14 to 34 (IIPCFVFVEILLGELARAFFP) and 66 to 86 (FLGVYSFGLFTTTIFANAGQV). A glycan (N-linked (GlcNAc...) asparagine) is linked at Asn-102. 3 consecutive transmembrane segments (helical) span residues 147 to 167 (AALCAYAVTYTAMYVTLVFRV), 176 to 196 (SLCLALLCPAFLVGVVRVAEY), and 203 to 223 (VLAGFLTGAAIATFLVTCVVH). Phosphoserine is present on residues Ser-236 and Ser-249. Disordered stretches follow at residues 255-280 (SVAQEPEGCRSHSTPARLTPSKPQNC) and 295-351 (APAM…GRKL). The segment covering 265 to 278 (SHSTPARLTPSKPQ) has biased composition (polar residues). The span at 314–339 (TPLPLPLPLPAPAPSQGPSPSSPGPG) shows a compositional bias: pro residues.

It belongs to the PA-phosphatase related phosphoesterase family.

The protein resides in the membrane. In Bos taurus (Bovine), this protein is Phospholipid phosphatase-related protein type 2.